The following is a 113-amino-acid chain: Gigasin-5 (113 aa).

Component of the organic matrix of calcified shell layers.

This Magallana gigas (Pacific oyster) protein is Gigasin-5.